The following is a 556-amino-acid chain: Solute carrier family 22 member 20 (556 aa).

At 1–15 the chain is on the cytoplasmic side; sequence MAFTDLLDALGGVGR. Residues 16 to 36 traverse the membrane as a helical segment; sequence FQLVYTALLLLPCGLLACHTF. Residues 37 to 137 are Extracellular-facing; the sequence is LQNFTAAAPP…LVCEARTLRD (101 aa). N-linked (GlcNAc...) asparagine glycosylation is found at asparagine 39, asparagine 54, asparagine 61, and asparagine 96. Residues 138–158 traverse the membrane as a helical segment; the sequence is LAQSIYMSGVLVGAALFGGLA. Residues 159–166 are Cytoplasmic-facing; that stretch reads DRLGRKAP. The helical transmembrane segment at 167-187 threads the bilayer; that stretch reads LVWSYLQLAVSGAATAYVGSF. Over 188 to 194 the chain is Extracellular; that stretch reads SAYCVFR. Residues 195–215 form a helical membrane-spanning segment; that stretch reads FLMGMTFSGIILNSLSLVVEW. Residues 216–225 lie on the Cytoplasmic side of the membrane; sequence MPTRGRTVAG. The chain crosses the membrane as a helical span at residues 226-246; sequence ILLGFSFTLGQLILAGVAYLI. Over 247–250 the chain is Extracellular; it reads RPWR. Residues 251–271 traverse the membrane as a helical segment; sequence WLQFAVSAPFLVFFLYSWWLP. The Cytoplasmic portion of the chain corresponds to 272-339; sequence ESSRWLLLHG…DLFRTPAIRR (68 aa). Residues 340–360 form a helical membrane-spanning segment; it reads VTCCLMGVWFSNSVAYYGLAM. The Extracellular portion of the chain corresponds to 361 to 366; sequence DLQKFG. Residues 367 to 387 traverse the membrane as a helical segment; the sequence is LSIYLVQALFGIIDIPAMLVA. At 388-397 the chain is on the cytoplasmic side; the sequence is TTTMIYVGRR. The chain crosses the membrane as a helical span at residues 398–418; sequence ATVSSFLILAGLMVIANMFMP. Residues 419–425 lie on the Extracellular side of the membrane; the sequence is EDLQTLR. Residues 426–446 form a helical membrane-spanning segment; the sequence is TVQAALGKGCLASSFICVYLF. The Cytoplasmic portion of the chain corresponds to 447-457; it reads TGELYPTEIRQ. Residues 458–478 traverse the membrane as a helical segment; it reads MGMGFASVNARLGGLVAPLIT. The Extracellular segment spans residues 479 to 485; it reads TLGEISP. The chain crosses the membrane as a helical span at residues 486 to 506; the sequence is VLPPVSFGATSVLAGMAVACF. Over 507–556 the chain is Cytoplasmic; sequence LTETRNVPLVETIAAMERRVKQGRSKRDTEQKSEEISLQQLGASPLKETI. A compositionally biased stretch (basic and acidic residues) spans 526–541; that stretch reads VKQGRSKRDTEQKSEE. The segment at 526–556 is disordered; that stretch reads VKQGRSKRDTEQKSEEISLQQLGASPLKETI.

The protein belongs to the major facilitator (TC 2.A.1) superfamily. Organic cation transporter (TC 2.A.1.19) family. Highly expressed in olfactory mucosa. Weakly expressed in testis. Not detected in heart, spleen, lung, kidney or brain.

The protein localises to the membrane. Functionally, organic anion transporter that mediates the uptake of estrone sulfate. Inhibited by probenecid, propionate, 2-methylbutyrate, 3-methylbutyrate, benzoate, heptanoate and 2-ethylhaxanoate. May act as an odorant transporter. The sequence is that of Solute carrier family 22 member 20 (Slc22a20) from Mus musculus (Mouse).